The primary structure comprises 456 residues: Phosphomethylpyrimidine synthase (456 aa).

Substrate is bound by residues Asn-80, Met-109, Tyr-139, His-175, 195-197, 236-239, and Glu-275; these read SRG and DSLR. His-279 provides a ligand contact to Zn(2+). Tyr-302 is a binding site for substrate. His-343 provides a ligand contact to Zn(2+). The [4Fe-4S] cluster site is built by Cys-423, Cys-426, and Cys-431.

This sequence belongs to the ThiC family. Requires [4Fe-4S] cluster as cofactor.

It catalyses the reaction 5-amino-1-(5-phospho-beta-D-ribosyl)imidazole + S-adenosyl-L-methionine = 4-amino-2-methyl-5-(phosphooxymethyl)pyrimidine + CO + 5'-deoxyadenosine + formate + L-methionine + 3 H(+). It functions in the pathway cofactor biosynthesis; thiamine diphosphate biosynthesis. Its function is as follows. Catalyzes the synthesis of the hydroxymethylpyrimidine phosphate (HMP-P) moiety of thiamine from aminoimidazole ribotide (AIR) in a radical S-adenosyl-L-methionine (SAM)-dependent reaction. The polypeptide is Phosphomethylpyrimidine synthase (Prochlorococcus marinus (strain AS9601)).